The sequence spans 398 residues: Argininosuccinate synthase (398 aa).

ATP is bound at residue 9-17 (AYSGGLDTS). Tyr85 serves as a coordination point for L-citrulline. An ATP-binding site is contributed by Gly115. L-aspartate contacts are provided by Thr117, Asn121, and Asp122. Asn121 is a binding site for L-citrulline. Positions 125, 173, 258, and 270 each coordinate L-citrulline.

The protein belongs to the argininosuccinate synthase family. Type 1 subfamily. In terms of assembly, homotetramer.

The protein resides in the cytoplasm. The enzyme catalyses L-citrulline + L-aspartate + ATP = 2-(N(omega)-L-arginino)succinate + AMP + diphosphate + H(+). It participates in amino-acid biosynthesis; L-arginine biosynthesis; L-arginine from L-ornithine and carbamoyl phosphate: step 2/3. The chain is Argininosuccinate synthase from Streptococcus pneumoniae (strain Hungary19A-6).